The primary structure comprises 147 residues: MAKEVAGLIKLQIKGGAANPSPPVGPALGSKGINIMEFCKQFNARTQDKAGKILPVIITYYADKSFDFVIKTPPVAIQLLEVAKVKSGSAEPNRKKVAEITWEQVRTIAQDKMVDLNCFTVEAAMRMVAGTARSMGIAVKGEFPVNN.

This sequence belongs to the universal ribosomal protein uL11 family. Part of the ribosomal stalk of the 50S ribosomal subunit. Interacts with L10 and the large rRNA to form the base of the stalk. L10 forms an elongated spine to which L12 dimers bind in a sequential fashion forming a multimeric L10(L12)X complex. One or more lysine residues are methylated.

Functionally, forms part of the ribosomal stalk which helps the ribosome interact with GTP-bound translation factors. In Bacteroides fragilis (strain ATCC 25285 / DSM 2151 / CCUG 4856 / JCM 11019 / LMG 10263 / NCTC 9343 / Onslow / VPI 2553 / EN-2), this protein is Large ribosomal subunit protein uL11.